A 69-amino-acid chain; its full sequence is Conotoxin Eb6.22 (69 aa).

An N-terminal signal peptide occupies residues 1 to 17; that stretch reads VLIIAVLFLTACQLTTA. Positions 18 to 41 are excised as a propeptide; sequence ETYSRGRQKHRARRSTDKNSKWTR. 3 disulfides stabilise this stretch: cysteine 43–cysteine 57, cysteine 50–cysteine 61, and cysteine 56–cysteine 68.

Belongs to the conotoxin O1 superfamily. In terms of tissue distribution, expressed by the venom duct.

It is found in the secreted. The polypeptide is Conotoxin Eb6.22 (E1) (Conus ebraeus (Hebrew cone)).